A 117-amino-acid polypeptide reads, in one-letter code: Large ribosomal subunit protein bL17 (117 aa).

The protein belongs to the bacterial ribosomal protein bL17 family. Part of the 50S ribosomal subunit. Contacts protein L32.

The sequence is that of Large ribosomal subunit protein bL17 from Coprothermobacter proteolyticus (strain ATCC 35245 / DSM 5265 / OCM 4 / BT).